Reading from the N-terminus, the 99-residue chain is Thylakoid membrane protein ssl2009 (99 aa).

Residues Gly10–Ala30 form a helical membrane-spanning segment. A coiled-coil region spans residues Asn50–His84.

It is found in the cellular thylakoid membrane. This Synechocystis sp. (strain ATCC 27184 / PCC 6803 / Kazusa) protein is Thylakoid membrane protein ssl2009.